A 112-amino-acid polypeptide reads, in one-letter code: Probable small nuclear ribonucleoprotein Sm D2 (112 aa).

A compositionally biased stretch (basic and acidic residues) spans 1 to 15 (MSRMNDETMEDKPDD). The tract at residues 1 to 23 (MSRMNDETMEDKPDDSNGPLSIL) is disordered. The Sm domain occupies 20–106 (LSILMDSVNN…VILVLKNPLG (87 aa)).

Belongs to the snRNP core protein family.

Its subcellular location is the nucleus. The protein resides in the cytoplasm. It localises to the cytosol. Its function is as follows. Plays a role in pre-mRNA splicing as a core component of the spliceosomal U1, U2, U4 and U5 small nuclear ribonucleoproteins (snRNPs), the building blocks of the spliceosome. The polypeptide is Probable small nuclear ribonucleoprotein Sm D2 (snrpd2) (Dictyostelium discoideum (Social amoeba)).